We begin with the raw amino-acid sequence, 727 residues long: MMTMQQTEFDSQFNEHIYRIVHVVHHQPHAFLGLHSFFEGSKVIRLWRPNAQQIFLELFGNIVEARRIHEMGIFECIVPSHTTAIDYKIFHQNGKLHFDPYAFLPTFGEVDQYLFGKGVHYELYHQMGGRLATHQGIQGVKFAVWAPNAKSVSLIADFNHWDGKVNPMRIMGYSGVWELFVPGLQEGEKYKFEIHTQQGERILKSDPYALSSELRPATASKIANIERFQWQDQAWMEQRKAKNWTSLPMNIYEVHLGSWKKKDSNSEFLNYRELAHELTAYCLDMGFTHIELLPIQEHPLDESWGYQVSGFYAPTSRFGHPEDFQYFVNYLHQHQISLILDWVPGHFPTDAFSLARFDGSALYEHADPRQGYHPHWHTNIFNFGRHEVSNFLIANALYWLEIMHVDGLRVDAVASMLYLDYGREENEWIPNDVGGKENLQAIEFLKHLNSIVHSKCPGSLMIAEESTSFTGVTHSVEKGGLGFDLKWNMGWMNDTLRYFSKDMLFRNYHHHDLTFGLVYAFSEKFISVFSHDEVVHGKKSLLSKMPGDMWQQFANLRLLISYMICQPGKKLLFMGAEIGQWNEWNCKSGLEWFLLQFPTHAGIHKFVQEINHFYLKQPALWQKDFSHESFEWVDFADMHNSVISYVRKGGTERLLCVHNFTPLYHSDYILHLSQFEHIEEIFNSDAEKFGGSGKHNLNPEIIRNEARSVIGLRLILAPLATLIFKLS.

The Nucleophile role is filled by D411. Residue E464 is the Proton donor of the active site.

The protein belongs to the glycosyl hydrolase 13 family. GlgB subfamily. In terms of assembly, monomer.

The enzyme catalyses Transfers a segment of a (1-&gt;4)-alpha-D-glucan chain to a primary hydroxy group in a similar glucan chain.. The protein operates within glycan biosynthesis; glycogen biosynthesis. In terms of biological role, catalyzes the formation of the alpha-1,6-glucosidic linkages in glycogen by scission of a 1,4-alpha-linked oligosaccharide from growing alpha-1,4-glucan chains and the subsequent attachment of the oligosaccharide to the alpha-1,6 position. This chain is 1,4-alpha-glucan branching enzyme GlgB, found in Protochlamydia amoebophila (strain UWE25).